A 107-amino-acid polypeptide reads, in one-letter code: Anti-adapter protein IraM (107 aa).

Belongs to the IraM/RssC family.

The protein localises to the cytoplasm. Its function is as follows. Inhibits RpoS proteolysis by regulating RssB activity, thereby increasing the stability of the sigma stress factor RpoS during magnesium starvation. This chain is Anti-adapter protein IraM, found in Escherichia coli O17:K52:H18 (strain UMN026 / ExPEC).